Consider the following 261-residue polypeptide: MRVALGIEYDGSSFCGWQRQLEVDSVQAQIEKALSYVANEPITVSCAGRTDTGVHGTGQVVHFDTDVQRPMTAWTQGVNANLPDSVAIRWAKEVDDSFHARYSATARRYRYVIYNHKLRPGILSAGVSHYHGDIDETLMHKAAQLFVGEHDFTSFRALHCQSKTPFRNVHQVNVTRQGMYVMVDIQANAFLHHMVRNIVGSLLQIGLGNQPIEWITELFALKNRKLAAPTAKPNGLYLVDVTYPEHYQLPKLALGPLFMLD.

The Nucleophile role is filled by Asp-51. Residue Tyr-109 participates in substrate binding.

This sequence belongs to the tRNA pseudouridine synthase TruA family. As to quaternary structure, homodimer.

The enzyme catalyses uridine(38/39/40) in tRNA = pseudouridine(38/39/40) in tRNA. Functionally, formation of pseudouridine at positions 38, 39 and 40 in the anticodon stem and loop of transfer RNAs. This chain is tRNA pseudouridine synthase A, found in Shewanella frigidimarina (strain NCIMB 400).